A 165-amino-acid polypeptide reads, in one-letter code: Phosphopantetheine adenylyltransferase (165 aa).

Substrate is bound at residue Thr10. ATP contacts are provided by residues 10 to 11 (TF) and His18. The substrate site is built by Lys42, Leu75, and Arg89. ATP is bound by residues 90–92 (GVR), Glu100, and 125–131 (VSFISSS).

The protein belongs to the bacterial CoaD family. Homohexamer. The cofactor is Mg(2+).

The protein resides in the cytoplasm. It carries out the reaction (R)-4'-phosphopantetheine + ATP + H(+) = 3'-dephospho-CoA + diphosphate. Its pathway is cofactor biosynthesis; coenzyme A biosynthesis; CoA from (R)-pantothenate: step 4/5. Its function is as follows. Reversibly transfers an adenylyl group from ATP to 4'-phosphopantetheine, yielding dephospho-CoA (dPCoA) and pyrophosphate. The sequence is that of Phosphopantetheine adenylyltransferase from Buchnera aphidicola subsp. Schizaphis graminum (strain Sg).